The following is a 270-amino-acid chain: Thiazole synthase (270 aa).

The active-site Schiff-base intermediate with DXP is the Lys-111. 1-deoxy-D-xylulose 5-phosphate is bound by residues Gly-172, 198-199 (AG), and 220-221 (NS). A disordered region spans residues 249–270 (AGRLPTRAQASPSSPTTGKVND). The span at 256-270 (AQASPSSPTTGKVND) shows a compositional bias: polar residues.

Belongs to the ThiG family. In terms of assembly, homotetramer. Forms heterodimers with either ThiH or ThiS.

It localises to the cytoplasm. It carries out the reaction [ThiS sulfur-carrier protein]-C-terminal-Gly-aminoethanethioate + 2-iminoacetate + 1-deoxy-D-xylulose 5-phosphate = [ThiS sulfur-carrier protein]-C-terminal Gly-Gly + 2-[(2R,5Z)-2-carboxy-4-methylthiazol-5(2H)-ylidene]ethyl phosphate + 2 H2O + H(+). It participates in cofactor biosynthesis; thiamine diphosphate biosynthesis. Its function is as follows. Catalyzes the rearrangement of 1-deoxy-D-xylulose 5-phosphate (DXP) to produce the thiazole phosphate moiety of thiamine. Sulfur is provided by the thiocarboxylate moiety of the carrier protein ThiS. In vitro, sulfur can be provided by H(2)S. The polypeptide is Thiazole synthase (Synechococcus sp. (strain WH7803)).